Consider the following 115-residue polypeptide: Large ribosomal subunit protein bL19 (115 aa).

It belongs to the bacterial ribosomal protein bL19 family.

In terms of biological role, this protein is located at the 30S-50S ribosomal subunit interface and may play a role in the structure and function of the aminoacyl-tRNA binding site. The chain is Large ribosomal subunit protein bL19 from Koribacter versatilis (strain Ellin345).